The following is a 563-amino-acid chain: PHD finger protein EHD3 (563 aa).

The interval 1–46 (MGSQNRPPPPRKRQPPPPEDHLVTYKRRRSKETQPLPLMANGANSK) is disordered. 3 consecutive PHD-type zinc fingers follow at residues 296-348 (LCPC…CSFK), 420-472 (SNLC…CWYC), and 474-524 (SCLC…CKIR).

As to quaternary structure, interacts with TRX1. In terms of tissue distribution, expressed in shoot apical meristem and leaves.

It is found in the nucleus. Functionally, probable transcription factor involved in the regulation of floral induction under long day (LD) conditions. Promotes photoperiodic flowering by repressing GHD7, a major floral repressor. Seems to function independently of HD1. The sequence is that of PHD finger protein EHD3 from Oryza sativa subsp. japonica (Rice).